The sequence spans 661 residues: 3-hydroxypropionyl-coenzyme A synthetase (661 aa).

Residue aspartate 526 is part of the active site. Residue lysine 617 is modified to N6-acetyllysine.

The protein belongs to the ATP-dependent AMP-binding enzyme family. Homotetramer.

It catalyses the reaction 3-hydroxypropanoate + ATP + CoA = 3-hydroxypropanoyl-CoA + AMP + diphosphate. In terms of biological role, plays a role in the autotrophic CO(2) fixation pathway. Activates 3-hydroxypropionate to its CoA ester. Can also activate propionate, and to a lesser extent acrylate, acetate and butyrate. This is 3-hydroxypropionyl-coenzyme A synthetase from Metallosphaera sedula (strain ATCC 51363 / DSM 5348 / JCM 9185 / NBRC 15509 / TH2).